The following is a 656-amino-acid chain: MKNQTKSNSLFQLSTNYIPTGDQPEAIKKLSEFKTKQQVLLGATGTGKTFTIANVIQNSQLPTVVIAHNKTLAGQLFNELKQLFPKNAVEYFISYFDFYQPEAYLPSKGIYIEKSATVNEAIKRLRVSTLHSLSTRKDVIVVGSVASIYPTSSPSDFVKYCLWFVVGKDYDLKTIKDRLVSLNYVVNKQQLTPGKFRFQGDVLEVFPGYSDAFVIRISFFDTKVEQICQIDPLTNKILNQLFEIKIGPADEYVVNQSDLDIAIKNIKQELQERVNYFNKQNLVERAQRLATITNHDLNDLKAWGFCSGVENYARHLELRMANSTPYSIFDYFKGDWLLVIDESHQTLPQLNGMYNTDLSRKQSLIDYGFRLPSALDNRPLSFAELQQKMQKVIYVSATPRDKEISLSQNNVIEQLVRPTYLVDPIIVVKPKDNQVEDLIEEIINQRQNNTRTFVTVLTIKMAENLTEYLKERKIKVAYIHKDIKALERLLLINDLRRGEYECLVGINLLREGLDVPEVALVCIFDADIPGLPRDERSLIQIIGRAARNEHGRVVMYANHVTEQMQKAIDETKRRRTVQMEYNKLHNKTPKTVVKPLTFVQPIKLKAKSNAEKNAALIKQLTKEMKKAAANQNYELAIEIRDSIFELEKEIGSKIKV.

A Helicase ATP-binding domain is found at K29–Q414. G42–T49 is an ATP binding site. Positions Y95 to V118 match the Beta-hairpin motif. Residues Q434–L596 form the Helicase C-terminal domain. The UVR domain occupies A614 to E649.

Belongs to the UvrB family. As to quaternary structure, forms a heterotetramer with UvrA during the search for lesions. Interacts with UvrC in an incision complex.

Its subcellular location is the cytoplasm. In terms of biological role, the UvrABC repair system catalyzes the recognition and processing of DNA lesions. A damage recognition complex composed of 2 UvrA and 2 UvrB subunits scans DNA for abnormalities. Upon binding of the UvrA(2)B(2) complex to a putative damaged site, the DNA wraps around one UvrB monomer. DNA wrap is dependent on ATP binding by UvrB and probably causes local melting of the DNA helix, facilitating insertion of UvrB beta-hairpin between the DNA strands. Then UvrB probes one DNA strand for the presence of a lesion. If a lesion is found the UvrA subunits dissociate and the UvrB-DNA preincision complex is formed. This complex is subsequently bound by UvrC and the second UvrB is released. If no lesion is found, the DNA wraps around the other UvrB subunit that will check the other stand for damage. This Mycoplasma genitalium (strain ATCC 33530 / DSM 19775 / NCTC 10195 / G37) (Mycoplasmoides genitalium) protein is UvrABC system protein B.